Reading from the N-terminus, the 534-residue chain is Probable RNA-binding protein 46 (534 aa).

RRM domains are found at residues 61 to 139 (CEVF…VSLD), 141 to 223 (CRLF…WASP), and 236 to 308 (KVLY…LAKP).

The protein resides in the cytoplasm. Functionally, essential for male and female fertility, playing a crucial role in regulating germ cell development by ensuring the proper progression of meiosis prophase I. This is Probable RNA-binding protein 46 (rbm46) from Xenopus tropicalis (Western clawed frog).